Consider the following 842-residue polypeptide: Alanine--tRNA ligase (842 aa).

Residues histidine 549, histidine 553, cysteine 650, and histidine 654 each coordinate Zn(2+).

It belongs to the class-II aminoacyl-tRNA synthetase family. Requires Zn(2+) as cofactor.

The protein resides in the cytoplasm. The enzyme catalyses tRNA(Ala) + L-alanine + ATP = L-alanyl-tRNA(Ala) + AMP + diphosphate. Its function is as follows. Catalyzes the attachment of alanine to tRNA(Ala) in a two-step reaction: alanine is first activated by ATP to form Ala-AMP and then transferred to the acceptor end of tRNA(Ala). Also edits incorrectly charged Ser-tRNA(Ala) and Gly-tRNA(Ala) via its editing domain. The sequence is that of Alanine--tRNA ligase from Campylobacter jejuni subsp. jejuni serotype O:6 (strain 81116 / NCTC 11828).